Reading from the N-terminus, the 269-residue chain is 23S rRNA (adenosine(1067)-2'-O)-methyltransferase (269 aa).

6 residues coordinate S-adenosyl-L-methionine: Arg135, Arg165, Leu195, Gly218, Ile238, and Leu247.

The protein belongs to the class IV-like SAM-binding methyltransferase superfamily. RNA methyltransferase TsnR/AvirB family. Homodimer.

It carries out the reaction adenosine(1067) in 23S rRNA + S-adenosyl-L-methionine = 2'-O-methyladenosine(1067) in 23S rRNA + S-adenosyl-L-homocysteine + H(+). In terms of biological role, specifically methylates the adenosine-1067 in 23S ribosomal RNA. Confers resistance to antibiotic thiostrepton. The protein is 23S rRNA (adenosine(1067)-2'-O)-methyltransferase (tsnR) of Streptomyces azureus.